The primary structure comprises 146 residues: Prolactin-inducible protein (146 aa).

The first 28 residues, Met1 to Ala28, serve as a signal peptide directing secretion. Pyrrolidone carboxylic acid is present on Gln29. Disulfide bonds link Cys65/Cys91 and Cys89/Cys123. The N-linked (GlcNAc...) asparagine glycan is linked to Asn105.

It belongs to the PIP family. In terms of assembly, monomer. Interacts with AZGP1. In terms of tissue distribution, expressed in pathological conditions of the mammary gland and in several exocrine tissues, such as the lacrimal, salivary, and sweat glands.

Its subcellular location is the secreted. This is Prolactin-inducible protein (PIP) from Homo sapiens (Human).